The sequence spans 212 residues: Thymidylate kinase (212 aa).

Residue Gly-10–Ser-17 participates in ATP binding.

It belongs to the thymidylate kinase family.

The enzyme catalyses dTMP + ATP = dTDP + ADP. Functionally, phosphorylation of dTMP to form dTDP in both de novo and salvage pathways of dTTP synthesis. This chain is Thymidylate kinase, found in Lactobacillus helveticus (strain DPC 4571).